A 433-amino-acid chain; its full sequence is GTPase Obg (433 aa).

Residues 1 to 159 (MAFRDVLDIE…RRVRLELRLI (159 aa)) enclose the Obg domain. An OBG-type G domain is found at 160–327 (ADVGLVGYPN…LRQALFDLLP (168 aa)). ATP contacts are provided by residues 166–173 (GYPNAGKS), 191–195 (FTTLS), 214–217 (DIPG), 280–283 (NKIE), and 308–310 (SAK). Residues S173 and T193 each coordinate Mg(2+). One can recognise an OCT domain in the interval 342–430 (PEEVREEPLT…IGSFRFEYYA (89 aa)).

This sequence belongs to the TRAFAC class OBG-HflX-like GTPase superfamily. OBG GTPase family. As to quaternary structure, monomer. The cofactor is Mg(2+).

It localises to the cytoplasm. Its function is as follows. An essential GTPase which binds GTP, GDP and possibly (p)ppGpp with moderate affinity, with high nucleotide exchange rates and a fairly low GTP hydrolysis rate. Plays a role in control of the cell cycle, stress response, ribosome biogenesis and in those bacteria that undergo differentiation, in morphogenesis control. In Deinococcus geothermalis (strain DSM 11300 / CIP 105573 / AG-3a), this protein is GTPase Obg.